Here is a 327-residue protein sequence, read N- to C-terminus: Fructose import binding protein FruE (327 aa).

The N-terminal stretch at 1–22 (MKNWKKAIALVASAAALVSVAA) is a signal peptide. Cys23 is lipidated: N-palmitoyl cysteine. Cys23 carries the S-diacylglycerol cysteine lipid modification.

This sequence belongs to the bacterial solute-binding protein 2 family. The complex is composed of an ATP-binding protein (FruK), two transmembrane proteins (FruF and FruG) and a solute-binding protein (FruE).

It is found in the cell membrane. Part of the high-affinity ABC transporter complex FruEKFG involved in fructose uptake. Can also transport ribose and xylose, with lower affinity. Binds fructose, ribose and xylose, with fructose as the preferred substrate. This Bifidobacterium longum (strain NCC 2705) protein is Fructose import binding protein FruE.